The following is a 548-amino-acid chain: 2-succinyl-5-enolpyruvyl-6-hydroxy-3-cyclohexene-1-carboxylate synthase (548 aa).

Belongs to the TPP enzyme family. MenD subfamily. Homodimer. It depends on Mg(2+) as a cofactor. The cofactor is Mn(2+). Thiamine diphosphate serves as cofactor.

The catalysed reaction is isochorismate + 2-oxoglutarate + H(+) = 5-enolpyruvoyl-6-hydroxy-2-succinyl-cyclohex-3-ene-1-carboxylate + CO2. Its pathway is quinol/quinone metabolism; 1,4-dihydroxy-2-naphthoate biosynthesis; 1,4-dihydroxy-2-naphthoate from chorismate: step 2/7. It functions in the pathway quinol/quinone metabolism; menaquinone biosynthesis. Its function is as follows. Catalyzes the thiamine diphosphate-dependent decarboxylation of 2-oxoglutarate and the subsequent addition of the resulting succinic semialdehyde-thiamine pyrophosphate anion to isochorismate to yield 2-succinyl-5-enolpyruvyl-6-hydroxy-3-cyclohexene-1-carboxylate (SEPHCHC). The chain is 2-succinyl-5-enolpyruvyl-6-hydroxy-3-cyclohexene-1-carboxylate synthase from Mycobacterium marinum (strain ATCC BAA-535 / M).